The following is a 230-amino-acid chain: Cytidylate kinase (230 aa).

Position 14–22 (14–22 (GPSGVGKSS)) interacts with ATP.

Belongs to the cytidylate kinase family. Type 1 subfamily.

The protein resides in the cytoplasm. It catalyses the reaction CMP + ATP = CDP + ADP. The enzyme catalyses dCMP + ATP = dCDP + ADP. The chain is Cytidylate kinase from Buchnera aphidicola subsp. Baizongia pistaciae (strain Bp).